An 826-amino-acid chain; its full sequence is MAAGKFASLPRNMPVNHQFPLASSMDLLSSKSPLVERRADAYQDVSIHGTLPRKKKGPPPIRSCDNFSHVGTLPHSRSPRHHSPLIQDVIQEQPLQDWKGEAFTFRDQHLLDPTLEYVKFSKERHVMDRTPERLKKELEEELLLSSEDLRSHAWYHGRIPRQVSENLMQRDGDFLVRDSLSSPGDFVLTCQWKNLPQHFKIRRTVVRLSEAYSRVQYQFEMESFDSIPGLVRCYVGNRRPISQQSGAIIFQPVNRTVPLRCLEERYGASSPDRAHEGSLTEGRPDAAKRLSLTVGGTQAREQGLPRGNLLRNKEKSGSQPACLDHMQDRRALSLKAHQSESYLPIGGKLTPQSPSVGTSPCPNSPVFRTGSEPTLSPAVVRRVSSDARPGEALRGSDSQLCPKPPPKPCKAPLLKAPPSPSIWLNSEANYCELNPALAASYDGASRLPFCAQDSYVELLTAKQNGGLGTRNSDTSYLILDDDDRTRPWKPPPAPGDTVGEDQDTFVMPLLETTSSFKPNDFESKLLPPENKPLETSMLKRAKELFTNSDPKVIAQHLLSVDCKVARILEVSEEMRKNMGVNSGLELITLPYGHQLRLDIIERHNTMAIGIAVDILGCTGSLEDRAATLNKIIQVAVELKDSMGDLYSFSAIMKALEMPQITRLEKTWTALRHQYTQTAILYEKQLKPFSKVLHEGRESTCVPPNNVSVPLLMPLVTLMEREAVTFEGTDMWEKNDESCEIMLNHLATARLMAEAADSYRMNAERILAGFQPDEEMSEVFKTEFQMRLLWGSKGAQVNQTERYEKFNQILTALSRKLEPPPVKQMEF.

Ala-2 carries the N-acetylalanine modification. Ser-32, Ser-78, Ser-83, and Ser-182 each carry phosphoserine. The segment at 46 to 81 is disordered; that stretch reads SIHGTLPRKKKGPPPIRSCDNFSHVGTLPHSRSPRH. Residues 154–253 enclose the SH2 domain; it reads WYHGRIPRQV…QSGAIIFQPV (100 aa). Residues 268–287 form a disordered region; sequence ASSPDRAHEGSLTEGRPDAA. Ser-291 bears the Phosphoserine mark. Residues 294–321 are disordered; it reads VGGTQAREQGLPRGNLLRNKEKSGSQPA. Lys-335 carries the N6-methyllysine modification. The interval 348 to 406 is disordered; it reads KLTPQSPSVGTSPCPNSPVFRTGSEPTLSPAVVRRVSSDARPGEALRGSDSQLCPKPPP. A compositionally biased stretch (polar residues) spans 350-361; it reads TPQSPSVGTSPC. 4 positions are modified to phosphoserine: Ser-359, Ser-364, Ser-376, and Ser-472. The interval 480 to 501 is disordered; it reads DDDDRTRPWKPPPAPGDTVGED. A Ras-GEF domain is found at 549–819; it reads DPKVIAQHLL…TALSRKLEPP (271 aa). The interval 745–749 is mediates the interaction with BCAR1/p130CAS; the sequence is LATAR.

In terms of assembly, part of a complex comprised of PTPRA, BCAR1, BCAR3 (via SH2 domain) and SRC; the formation of the complex is dependent on integrin mediated-tyrosine phosphorylation of PTPRA. Within the complex, interacts (via SH2 domain) with PTPRA (when phosphorylated on 'Tyr-797'). Interacts (via Ras-GEF domain) with BCAR1. Interacts (via Ras-GEF domain) with NEDD9. Interacts with PTK2/FAK1. Interacts with PTPN1. Interacts (via SH2 domain) with EGFR (when tyrosine-phosphorylated). In terms of processing, phosphorylated on tyrosine residues.

It localises to the cytoplasm. The protein resides in the cell junction. It is found in the focal adhesion. Functionally, acts as an adapter protein downstream of several growth factor receptors to promote cell proliferation, migration, and redistribution of actin fibers. Specifically involved in INS/insulin signaling pathway by mediating MAPK1/ERK2-MAPK3/ERK1 activation and DNA synthesis. Promotes insulin-mediated membrane ruffling. In response to vasoconstrictor peptide EDN1, involved in the activation of RAP1 downstream of PTK2B via interaction with phosphorylated BCAR1. Inhibits cell migration and invasion via regulation of TGFB-mediated matrix digestion, actin filament rearrangement, and inhibition of invadopodia activity. May inhibit TGFB-SMAD signaling, via facilitating BCAR1 and SMAD2 and/or SMAD3 interaction. Regulates EGF-induced DNA synthesis. Required for the maintenance of ocular lens morphology and structural integrity, potentially via regulation of focal adhesion complex signaling. Acts upstream of PTPRA to regulate the localization of BCAR1 and PTPRA to focal adhesions, via regulation of SRC-mediated phosphorylation of PTPRA. Positively regulates integrin-induced tyrosine phosphorylation of BCAR1. Acts as a guanine nucleotide exchange factor (GEF) for small GTPases RALA, RAP1A and RRAS. However, in a contrasting study, lacks GEF activity towards RAP1. This chain is Breast cancer anti-estrogen resistance protein 3 homolog (BCAR3), found in Bos taurus (Bovine).